An 81-amino-acid chain; its full sequence is Protein Vpu (81 aa).

At 1-7 (MQPLQIL) the chain is on the extracellular side. A helical membrane pass occupies residues 8–28 (AIVALVVAAIIAIVVWTIVYI). The Cytoplasmic portion of the chain corresponds to 29–81 (EYRKILRQRKIDRLIDRITERAEDSGNESEGDQEELSALVERGHLAPWDVDDL). Residues 50–81 (AEDSGNESEGDQEELSALVERGHLAPWDVDDL) form a disordered region. Phosphoserine; by host CK2 is present on residues S53 and S57. A compositionally biased stretch (acidic residues) spans 53–63 (SGNESEGDQEE).

This sequence belongs to the HIV-1 VPU protein family. Homopentamer. Interacts with host CD4 and BRTC; these interactions induce proteasomal degradation of CD4. Interacts with host BST2; this interaction leads to the degradation of host BST2. Interacts with host FBXW11. Interacts with host AP1M1; this interaction plays a role in the mistrafficking and subsequent degradation of host BST2. Interacts with host RANBP2; this interaction allows Vpu to down-regulate host BLM sumoylation. Post-translationally, phosphorylated by host CK2. This phosphorylation is necessary for interaction with human BTRC and degradation of CD4.

It is found in the host membrane. Ion channel activity is inhibited by hexamethylene amiloride in vitro. Its function is as follows. Enhances virion budding by targeting host CD4 and Tetherin/BST2 to proteasome degradation. Degradation of CD4 prevents any unwanted premature interactions between viral Env and its host receptor CD4 in the endoplasmic reticulum. Degradation of antiretroviral protein Tetherin/BST2 is important for virion budding, as BST2 tethers new viral particles to the host cell membrane. Mechanistically, Vpu bridges either CD4 or BST2 to BTRC, a substrate recognition subunit of the Skp1/Cullin/F-box protein E3 ubiquitin ligase, induces their ubiquitination and subsequent proteasomal degradation. The alteration of the E3 ligase specificity by Vpu seems to promote the degradation of host IKBKB, leading to NF-kappa-B down-regulation and subsequent apoptosis. Acts as a viroporin that forms an oligomeric ion channel in membranes. Modulates the host DNA repair mechanisms to promote degradation of nuclear viral cDNA in cells that are already productively infected in order to suppress immune sensing and proviral hyper-integration (superinfection). Manipulates PML-NBs and modulates SUMOylation of host BLM protein thereby enhancing its DNA-end processing activity toward viral unintegrated linear DNA. Also inhibits RAD52-mediated homologous repair of viral cDNA, preventing the generation of dead-end circular forms of single copies of the long terminal repeat and permitting sustained nucleolytic attack. The chain is Protein Vpu from Human immunodeficiency virus type 1 group M subtype B (isolate SF162) (HIV-1).